The following is a 666-amino-acid chain: MAINTSNLCSLLFLLSLFLLSTTVSLAESEFDRQEYEECKRQCMQLETSGQMRRCVSQCDKRFEEDIDWSKYDNQDDPQTDCQQCQRRCRQQESGPRQQQYCQRRCKEICEEEEEYNRQRDPQQQYEQCQERCQRHETEPRHMQTCQQRCERRYEKEKRKQQKRYEEQQREDEEKYEERMKEEDNKRDPQQREYEDCRRRCEQQEPRQQYQCQRRCREQQRQHGRGGDLINPQRGGSGRYEEGEEKQSDNPYYFDERSLSTRFRTEEGHISVLENFYGRSKLLRALKNYRLVLLEANPNAFVLPTHLDADAILLVTGGRGALKMIHRDNRESYNLECGDVIRIPAGTTFYLINRDNNERLHIAKFLQTISTPGQYKEFFPAGGQNPEPYLSTFSKEILEAALNTQAERLRGVLGQQREGVIISASQEQIRELTRDDSESRRWHIRRGGESSRGPYNLFNKRPLYSNKYGQAYEVKPEDYRQLQDMDVSVFIANITQGSMMGPFFNTRSTKVVVVASGEADVEMACPHLSGRHGGRRGGKRHEEEEDVHYEQVKARLSKREAIVVPVGHPVVFVSSGNENLLLFAFGINAQNNHENFLAGRERNVLQQIEPQAMELAFAAPRKEVEELFNSQDESIFFPGPRQHQQQSSRSTKQQQPLVSILDFVGF.

The signal sequence occupies residues 1–27; that stretch reads MAINTSNLCSLLFLLSLFLLSTTVSLA. 2 disordered regions span residues 161–191 and 221–251; these read QQKR…DPQQ and RQHG…SDNP. The span at 239-251 shows a compositional bias: basic and acidic residues; it reads RYEEGEEKQSDNP. 2 Cupin type-1 domains span residues 271–410 and 455–625; these read SVLE…ERLR and YNLF…KEVE.

It belongs to the 7S seed storage protein family.

The protein localises to the secreted. Antimicrobial peptides 2b, 2c and 2d have antibacterial and antifungal activity against a range of species. The chain is Vicilin-like antimicrobial peptides 2-2 from Macadamia integrifolia (Macadamia nut).